The chain runs to 101 residues: Small ribosomal subunit protein bS18c (101 aa).

The tract at residues lysine 82 to lysine 101 is disordered.

This sequence belongs to the bacterial ribosomal protein bS18 family. As to quaternary structure, part of the 30S ribosomal subunit.

It is found in the plastid. It localises to the chloroplast. The sequence is that of Small ribosomal subunit protein bS18c from Platanus occidentalis (Sycamore).